The following is a 98-amino-acid chain: NADH-ubiquinone oxidoreductase chain 4L (98 aa).

A run of 3 helical transmembrane segments spans residues 2 to 22 (PSIF…TLVF), 29 to 49 (SLLC…LIIL), and 61 to 81 (ILLL…LVMV).

It belongs to the complex I subunit 4L family. Core subunit of respiratory chain NADH dehydrogenase (Complex I) which is composed of 45 different subunits.

The protein localises to the mitochondrion inner membrane. The enzyme catalyses a ubiquinone + NADH + 5 H(+)(in) = a ubiquinol + NAD(+) + 4 H(+)(out). In terms of biological role, core subunit of the mitochondrial membrane respiratory chain NADH dehydrogenase (Complex I) which catalyzes electron transfer from NADH through the respiratory chain, using ubiquinone as an electron acceptor. Part of the enzyme membrane arm which is embedded in the lipid bilayer and involved in proton translocation. This is NADH-ubiquinone oxidoreductase chain 4L (MT-ND4L) from Propithecus diadema diadema (Diademed sifaka).